The sequence spans 217 residues: MTPRIWELVGLSTLETLYMGFIATLFAIVIGLPIGLLAFLTGKGEILENRRANQVLNVIINIGRSVPFIILLIILLPFTRLVVGTTLGTTAAIVPLSVSAIPFFARLTANALLEIPSGLTEAAKSMGATNWQIVTKYYLPESIPILINGITLTLVALIGYSAMAGAVGGGGLGNLAITYGEHRNMIYVKWIATIIIVLIVMLSQKLGDHLAERFDHR.

Positions 13 to 207 constitute an ABC transmembrane type-1 domain; the sequence is TLETLYMGFI…LIVMLSQKLG (195 aa). Transmembrane regions (helical) follow at residues 20–40, 58–78, 81–101, 143–163, and 184–204; these read GFIA…LAFL, VIIN…LLPF, LVVG…VSAI, IPIL…YSAM, and NMIY…MLSQ.

Belongs to the binding-protein-dependent transport system permease family. CysTW subfamily.

Its subcellular location is the cell inner membrane. Part of the binding-protein-dependent transport system for D-methionine. Probably responsible for the translocation of the substrate across the membrane. In Pasteurella multocida (strain Pm70), this protein is Probable D-methionine transport system permease protein MetI (metI).